We begin with the raw amino-acid sequence, 291 residues long: 4-hydroxy-tetrahydrodipicolinate synthase (291 aa).

Thr44 is a binding site for pyruvate. The active-site Proton donor/acceptor is Tyr132. Catalysis depends on Lys160, which acts as the Schiff-base intermediate with substrate. Val202 is a binding site for pyruvate.

This sequence belongs to the DapA family. In terms of assembly, homotetramer; dimer of dimers.

Its subcellular location is the cytoplasm. The enzyme catalyses L-aspartate 4-semialdehyde + pyruvate = (2S,4S)-4-hydroxy-2,3,4,5-tetrahydrodipicolinate + H2O + H(+). The protein operates within amino-acid biosynthesis; L-lysine biosynthesis via DAP pathway; (S)-tetrahydrodipicolinate from L-aspartate: step 3/4. Catalyzes the condensation of (S)-aspartate-beta-semialdehyde [(S)-ASA] and pyruvate to 4-hydroxy-tetrahydrodipicolinate (HTPA). The protein is 4-hydroxy-tetrahydrodipicolinate synthase of Clostridium perfringens (strain SM101 / Type A).